We begin with the raw amino-acid sequence, 493 residues long: Desmethylyatein synthase (493 aa).

The helical transmembrane segment at 1–21 (METFQCLTLFLLFISTVFILK) threads the bilayer. Cys434 is a heme binding site.

It belongs to the cytochrome P450 family. It depends on heme as a cofactor.

The protein resides in the membrane. The enzyme catalyses (-)-bursehernin + reduced [NADPH--hemoprotein reductase] + O2 = (-)-5'-demethylyatein + oxidized [NADPH--hemoprotein reductase] + H2O + H(+). The protein operates within aromatic compound metabolism; phenylpropanoid biosynthesis. Its function is as follows. Cytochrome P450 involved in the biosynthesis of etoposide, a chemotherapeutic compound of the topoisomerase inhibitor family. Catalyzes the conversion of bursehernin to demethylyatein. This chain is Desmethylyatein synthase, found in Sinopodophyllum hexandrum (Himalayan may apple).